Here is a 119-residue protein sequence, read N- to C-terminus: MKCIAIVSTICLLAAFVAADKEDKMLGSSYGGGYGKPAAAPAPSYSAPAAAPQAYAAPAAPSYAAAPVSIPAPPCPKNYLFSCQPNLAPVPCSAPAPSYGSAGAYSQYAPVYAPQPIQW.

The signal sequence occupies residues Met1–Ala19. The VM domain occupies Ser69–Ser106.

It belongs to the vitelline membrane protein family. As to expression, follicle cells.

The protein localises to the secreted. Functionally, major early eggshell protein. In Drosophila melanogaster (Fruit fly), this protein is Vitelline membrane protein Vm34Ca (Vm34Ca).